An 85-amino-acid polypeptide reads, in one-letter code: Small ribosomal subunit protein uS17 (85 aa).

Belongs to the universal ribosomal protein uS17 family. As to quaternary structure, part of the 30S ribosomal subunit.

Functionally, one of the primary rRNA binding proteins, it binds specifically to the 5'-end of 16S ribosomal RNA. The protein is Small ribosomal subunit protein uS17 of Ruminiclostridium cellulolyticum (strain ATCC 35319 / DSM 5812 / JCM 6584 / H10) (Clostridium cellulolyticum).